A 189-amino-acid polypeptide reads, in one-letter code: Protein GrpE (189 aa).

Residues 1-24 (MADEQTVDTQNPEANQAPEASGDD) are disordered.

This sequence belongs to the GrpE family. As to quaternary structure, homodimer.

The protein localises to the cytoplasm. Its function is as follows. Participates actively in the response to hyperosmotic and heat shock by preventing the aggregation of stress-denatured proteins, in association with DnaK and GrpE. It is the nucleotide exchange factor for DnaK and may function as a thermosensor. Unfolded proteins bind initially to DnaJ; upon interaction with the DnaJ-bound protein, DnaK hydrolyzes its bound ATP, resulting in the formation of a stable complex. GrpE releases ADP from DnaK; ATP binding to DnaK triggers the release of the substrate protein, thus completing the reaction cycle. Several rounds of ATP-dependent interactions between DnaJ, DnaK and GrpE are required for fully efficient folding. The protein is Protein GrpE of Pseudomonas fluorescens (strain Pf0-1).